The sequence spans 276 residues: UPF0276 protein Caul_0757 (276 aa).

Belongs to the UPF0276 family.

The sequence is that of UPF0276 protein Caul_0757 from Caulobacter sp. (strain K31).